We begin with the raw amino-acid sequence, 658 residues long: Glycogen debranching enzyme (658 aa).

Asp-336 functions as the Nucleophile in the catalytic mechanism. The active-site Proton donor is Glu-371.

Belongs to the glycosyl hydrolase 13 family.

The catalysed reaction is Hydrolysis of (1-&gt;6)-alpha-D-glucosidic linkages to branches with degrees of polymerization of three or four glucose residues in limit dextrin.. It participates in glycan degradation; glycogen degradation. Functionally, removes maltotriose and maltotetraose chains that are attached by 1,6-alpha-linkage to the limit dextrin main chain, generating a debranched limit dextrin. In Klebsiella pneumoniae subsp. pneumoniae (strain ATCC 700721 / MGH 78578), this protein is Glycogen debranching enzyme.